The primary structure comprises 363 residues: Protein RecA (363 aa).

66–73 (GPESSGKT) serves as a coordination point for ATP. A disordered region spans residues 327-363 (YGIDEKSIADRENPEKIKEKREETSEENKTDNSEKTK). The span at 329–363 (IDEKSIADRENPEKIKEKREETSEENKTDNSEKTK) shows a compositional bias: basic and acidic residues.

This sequence belongs to the RecA family.

The protein localises to the cytoplasm. Functionally, can catalyze the hydrolysis of ATP in the presence of single-stranded DNA, the ATP-dependent uptake of single-stranded DNA by duplex DNA, and the ATP-dependent hybridization of homologous single-stranded DNAs. It interacts with LexA causing its activation and leading to its autocatalytic cleavage. The chain is Protein RecA from Lactobacillus acidophilus (strain ATCC 700396 / NCK56 / N2 / NCFM).